Consider the following 172-residue polypeptide: 3-hydroxydecanoyl-[acyl-carrier-protein] dehydratase (172 aa).

Residue H71 is part of the active site.

This sequence belongs to the thioester dehydratase family. FabA subfamily. In terms of assembly, homodimer.

Its subcellular location is the cytoplasm. The enzyme catalyses a (3R)-hydroxyacyl-[ACP] = a (2E)-enoyl-[ACP] + H2O. The catalysed reaction is (3R)-hydroxydecanoyl-[ACP] = (2E)-decenoyl-[ACP] + H2O. It carries out the reaction (2E)-decenoyl-[ACP] = (3Z)-decenoyl-[ACP]. Its pathway is lipid metabolism; fatty acid biosynthesis. Functionally, necessary for the introduction of cis unsaturation into fatty acids. Catalyzes the dehydration of (3R)-3-hydroxydecanoyl-ACP to E-(2)-decenoyl-ACP and then its isomerization to Z-(3)-decenoyl-ACP. Can catalyze the dehydratase reaction for beta-hydroxyacyl-ACPs with saturated chain lengths up to 16:0, being most active on intermediate chain length. This chain is 3-hydroxydecanoyl-[acyl-carrier-protein] dehydratase, found in Escherichia coli O127:H6 (strain E2348/69 / EPEC).